Reading from the N-terminus, the 76-residue chain is Defensin-like protein 71 (76 aa).

A signal peptide spans 1–22 (MAMTQVFVIFILLATSLCNSNA). 4 disulfides stabilise this stretch: Cys36/Cys74, Cys40/Cys63, Cys49/Cys72, and Cys53/Cys73.

This sequence belongs to the DEFL family.

It is found in the secreted. This chain is Defensin-like protein 71 (LCR84), found in Arabidopsis thaliana (Mouse-ear cress).